Reading from the N-terminus, the 141-residue chain is Transcription antitermination protein NusB (141 aa).

This sequence belongs to the NusB family.

Involved in transcription antitermination. Required for transcription of ribosomal RNA (rRNA) genes. Binds specifically to the boxA antiterminator sequence of the ribosomal RNA (rrn) operons. In Treponema pallidum (strain Nichols), this protein is Transcription antitermination protein NusB.